The sequence spans 264 residues: Exodeoxyribonuclease YycJ (264 aa).

A divalent metal cation is bound by residues His58, His60, Asp62, His63, and Asp145.

This sequence belongs to the metallo-beta-lactamase superfamily. Requires Fe(2+) as cofactor. Zn(2+) is required as a cofactor. The cofactor is Mn(2+).

In terms of biological role, 5'-&gt;3' double-stranded DNA exonuclease. May play a role in mutation mismatch repair (MMR). Required for accurate coordination of cell division with DNA replication. May play a role in cell wall metabolism. In Bacillus anthracis, this protein is Exodeoxyribonuclease YycJ.